A 369-amino-acid chain; its full sequence is Nudix hydrolase 8 (369 aa).

The Nudix hydrolase domain maps to serine 188–glutamate 318. The Nudix box motif lies at glycine 225–glycine 246. Residues glutamate 240 and glutamate 244 each contribute to the Mg(2+) site.

The protein belongs to the Nudix hydrolase family. It depends on Mg(2+) as a cofactor. Requires Mn(2+) as cofactor. In terms of tissue distribution, expressed in roots, stems and, at lower level, leaves.

Probably mediates the hydrolysis of some nucleoside diphosphate derivatives. May be involved in plant immunity and act as a positive regulator of defense response through salicylic acid (SA) signaling. This is Nudix hydrolase 8 (NUDT8) from Arabidopsis thaliana (Mouse-ear cress).